The following is a 258-amino-acid chain: Trans-aconitate 2-methyltransferase (258 aa).

Belongs to the methyltransferase superfamily. Tam family.

It is found in the cytoplasm. The enzyme catalyses trans-aconitate + S-adenosyl-L-methionine = (E)-3-(methoxycarbonyl)pent-2-enedioate + S-adenosyl-L-homocysteine. Functionally, catalyzes the S-adenosylmethionine monomethyl esterification of trans-aconitate. The sequence is that of Trans-aconitate 2-methyltransferase from Methylobacterium nodulans (strain LMG 21967 / CNCM I-2342 / ORS 2060).